A 436-amino-acid polypeptide reads, in one-letter code: Cyclin-A2-2 (436 aa).

The protein belongs to the cyclin family. Cyclin AB subfamily. As to expression, expressed in roots, stems, leaves, flowers and siliques.

The chain is Cyclin-A2-2 (CYCA2-2) from Arabidopsis thaliana (Mouse-ear cress).